The sequence spans 531 residues: T-complex protein 1 subunit zeta-2 (531 aa).

This sequence belongs to the TCP-1 chaperonin family. As to quaternary structure, component of the chaperonin-containing T-complex (TRiC), a heterooligomeric complex of about 850 to 900 kDa that forms two stacked rings, 12 to 16 nm in diameter.

Its subcellular location is the cytoplasm. Functionally, component of the chaperonin-containing T-complex (TRiC), a molecular chaperone complex that assists the folding of proteins upon ATP hydrolysis. This Bos taurus (Bovine) protein is T-complex protein 1 subunit zeta-2 (CCT6B).